The chain runs to 250 residues: tRNA (guanine-N(1)-)-methyltransferase (250 aa).

S-adenosyl-L-methionine-binding positions include G115 and 135-140 (LGDFVL).

This sequence belongs to the RNA methyltransferase TrmD family. Homodimer.

The protein resides in the cytoplasm. The enzyme catalyses guanosine(37) in tRNA + S-adenosyl-L-methionine = N(1)-methylguanosine(37) in tRNA + S-adenosyl-L-homocysteine + H(+). Functionally, specifically methylates guanosine-37 in various tRNAs. The sequence is that of tRNA (guanine-N(1)-)-methyltransferase from Legionella pneumophila (strain Lens).